The chain runs to 62 residues: MSYYGSYYGGLGSGIRGFGNLGYGYGCGCGFGGYGYGSGYGRYGYGYPRPLYYGGYGFSRFY.

Residues 5–56 form a 14 X 2 AA repeats of G-[YCGS] region; sequence GSYYGGLGSGIRGFGNLGYGYGCGCGFGGYGYGSGYGRYGYGYPRPLYYGGY.

This sequence belongs to the KRTAP type 19 family. In terms of assembly, interacts with hair keratins. In terms of tissue distribution, expressed in skin during two hair growth cycles. Expression restricted to the cortical cells of hair follicles, appearing first in the cortical cells processing the flat nuclei located a few cells above the dermal papilla.

Functionally, in the hair cortex, hair keratin intermediate filaments are embedded in an interfilamentous matrix, consisting of hair keratin-associated proteins (KRTAP), which are essential for the formation of a rigid and resistant hair shaft through their extensive disulfide bond cross-linking with abundant cysteine residues of hair keratins. The matrix proteins include the high-sulfur and high-glycine-tyrosine keratins. The chain is Keratin-associated protein 19-5 (Krtap19-5) from Mus musculus (Mouse).